A 790-amino-acid chain; its full sequence is Penicillin-binding protein 1A (790 aa).

Residues 1–6 (MYKSLL) are Cytoplasmic-facing. The helical; Signal-anchor for type II membrane protein transmembrane segment at 7-27 (FCLKIFVFLILVGCGITAYII) threads the bilayer. Residues 28-790 (YHYSRDLPDY…SKEDQSQEIY (763 aa)) lie on the Periplasmic side of the membrane. The transglycosylase stretch occupies residues 49–220 (TRIYSRDGKL…SELNPERNYA (172 aa)). Glu-87 functions as the Proton donor; for transglycosylase activity in the catalytic mechanism. The tract at residues 398 to 711 (DVIVVEAIKE…SNVVLPIFID (314 aa)) is transpeptidase. Ser-457 functions as the Acyl-ester intermediate; for transpeptidase activity in the catalytic mechanism.

It in the N-terminal section; belongs to the glycosyltransferase 51 family. This sequence in the C-terminal section; belongs to the transpeptidase family.

Its subcellular location is the cell inner membrane. The enzyme catalyses [GlcNAc-(1-&gt;4)-Mur2Ac(oyl-L-Ala-gamma-D-Glu-L-Lys-D-Ala-D-Ala)](n)-di-trans,octa-cis-undecaprenyl diphosphate + beta-D-GlcNAc-(1-&gt;4)-Mur2Ac(oyl-L-Ala-gamma-D-Glu-L-Lys-D-Ala-D-Ala)-di-trans,octa-cis-undecaprenyl diphosphate = [GlcNAc-(1-&gt;4)-Mur2Ac(oyl-L-Ala-gamma-D-Glu-L-Lys-D-Ala-D-Ala)](n+1)-di-trans,octa-cis-undecaprenyl diphosphate + di-trans,octa-cis-undecaprenyl diphosphate + H(+). It catalyses the reaction Preferential cleavage: (Ac)2-L-Lys-D-Ala-|-D-Ala. Also transpeptidation of peptidyl-alanyl moieties that are N-acyl substituents of D-alanine.. The protein operates within cell wall biogenesis; peptidoglycan biosynthesis. Its function is as follows. Cell wall formation. Synthesis of cross-linked peptidoglycan from the lipid intermediates. The enzyme has a penicillin-insensitive transglycosylase N-terminal domain (formation of linear glycan strands) and a penicillin-sensitive transpeptidase C-terminal domain (cross-linking of the peptide subunits). This chain is Penicillin-binding protein 1A (mrcA), found in Rickettsia conorii (strain ATCC VR-613 / Malish 7).